A 428-amino-acid chain; its full sequence is Histone deacetylase 3 (428 aa).

The histone deacetylase stretch occupies residues 3–316; sequence KTVAYFYDPD…WTYETSLLVD (314 aa). 1D-myo-inositol 1,4,5,6-tetrakisphosphate contacts are provided by histidine 17, glycine 21, and lysine 25. The active site involves histidine 135. Residues aspartate 170, histidine 172, and aspartate 259 each coordinate Zn(2+). Position 265 (arginine 265) interacts with 1D-myo-inositol 1,4,5,6-tetrakisphosphate. Residues 385–428 form a disordered region; the sequence is LSYDRTDEPDPEERGSEENYSRPEAANEFYDGDHDNDKESDVEI. 2 stretches are compositionally biased toward basic and acidic residues: residues 386–405 and 415–428; these read SYDR…ENYS and DGDH…DVEI.

This sequence belongs to the histone deacetylase family. HD type 1 subfamily.

The protein localises to the nucleus. The protein resides in the chromosome. Its subcellular location is the cytoplasm. It is found in the cytosol. The catalysed reaction is N(6)-acetyl-L-lysyl-[histone] + H2O = L-lysyl-[histone] + acetate. It carries out the reaction N(6)-acetyl-L-lysyl-[protein] + H2O = L-lysyl-[protein] + acetate. It catalyses the reaction N(6)-(2E)-butenoyl-L-lysyl-[protein] + H2O = (2E)-2-butenoate + L-lysyl-[protein]. The enzyme catalyses N(6)-(2-hydroxyisobutanoyl)-L-lysyl-[protein] + H2O = 2-hydroxy-2-methylpropanoate + L-lysyl-[protein]. The catalysed reaction is N(6)-[(S)-lactoyl]-L-lysyl-[protein] + H2O = (S)-lactate + L-lysyl-[protein]. Inositol tetraphosphate (1D-myo-inositol 1,4,5,6-tetrakisphosphate) promotes the histone deacetylase activity by acting as an intermolecular glue between HDAC3 and N-Cor repressor complex components. Its function is as follows. Histone deacetylase that catalyzes the deacetylation of lysine residues on the N-terminal part of the core histones (H2A, H2B, H3 and H4), and some other non-histone substrates. Histone deacetylation gives a tag for epigenetic repression and plays an important role in transcriptional regulation, cell cycle progression and developmental events. Histone deacetylases act via the formation of large multiprotein complexes, such as N-Cor repressor complex, which activate the histone deacetylase activity. Participates in the BCL6 transcriptional repressor activity by deacetylating the H3 'Lys-27' (H3K27) on enhancer elements, antagonizing EP300 acetyltransferase activity and repressing proximal gene expression. Also functions as a deacetylase for non-histone targets. In addition to protein deacetylase activity, also acts as a protein-lysine deacylase by recognizing other acyl groups: catalyzes removal of (2E)-butenoyl (crotonyl), lactoyl (lactyl) and 2-hydroxyisobutanoyl (2-hydroxyisobutyryl) acyl groups from lysine residues, leading to protein decrotonylation, delactylation and de-2-hydroxyisobutyrylation, respectively. This Gallus gallus (Chicken) protein is Histone deacetylase 3 (HDAC3).